We begin with the raw amino-acid sequence, 225 residues long: PKHD-type hydroxylase YbiX (225 aa).

The Fe2OG dioxygenase domain occupies 78-177 (TLSTPLFNRY…RVASFMWIQS (100 aa)). Histidine 96, aspartate 98, and histidine 158 together coordinate Fe cation. Arginine 168 contacts 2-oxoglutarate.

Fe(2+) serves as cofactor. L-ascorbate is required as a cofactor.

In Shigella boydii serotype 4 (strain Sb227), this protein is PKHD-type hydroxylase YbiX.